A 377-amino-acid polypeptide reads, in one-letter code: Trichodiene synthase (377 aa).

Belongs to the trichodiene synthase family.

It carries out the reaction (2E,6E)-farnesyl diphosphate = trichodiene + diphosphate. It participates in sesquiterpene biosynthesis; trichothecene biosynthesis. Functionally, TS is a member of the terpene cyclase group of enzymes. It catalyzes the isomerization and cyclization of farnesyl pyro-phosphate to form trichodiene, the first cyclic intermediate in the biosynthetic pathway for trichothecenes. It serves to branch trichothecene biosynthesis from the isoprenoid pathway. In Fusarium poae, this protein is Trichodiene synthase (TRI5).